Here is a 328-residue protein sequence, read N- to C-terminus: MAAPLNAQTRAPQATGRAPDFSPYLDFDRAQWRELRKSMPQVLTEEEVVALRGLGENIDLDEVAEVYLPLSRLIHLQVNARQELTVATETFLGTSSARMFPGSHVPFVIGVAGSVAVGKSTTARLLQVLLQRWSSHPRVDLVTTDGFLYPGEELQRRGIMNRKGFPESYDQRALLRFVTDVKSGKFNVRAPVYSHTAYDRVPGKYITVDQPDILIVEGLNVLQTGPTLMVSDLFDFSVYVDARTEDIERWYIERFLQLRDTAFRHPDAHFRHYADIGDEKATAVAREIWQSINLPNLVENILPTRVRASLVLRKSADHLVERVRMRKL.

Positions 1 to 12 (MAAPLNAQTRAP) are enriched in polar residues. A disordered region spans residues 1 to 22 (MAAPLNAQTRAPQATGRAPDFS). Position 113 to 120 (113 to 120 (GSVAVGKS)) interacts with ATP.

This sequence belongs to the prokaryotic pantothenate kinase family.

The protein localises to the cytoplasm. It carries out the reaction (R)-pantothenate + ATP = (R)-4'-phosphopantothenate + ADP + H(+). It participates in cofactor biosynthesis; coenzyme A biosynthesis; CoA from (R)-pantothenate: step 1/5. The sequence is that of Pantothenate kinase from Corynebacterium efficiens (strain DSM 44549 / YS-314 / AJ 12310 / JCM 11189 / NBRC 100395).